Here is a 62-residue protein sequence, read N- to C-terminus: uncharacterized protein (62 aa).

This is an uncharacterized protein from Escherichia coli (strain K12).